Reading from the N-terminus, the 278-residue chain is Large ribosomal subunit protein uL2 (278 aa).

Disordered stretches follow at residues methionine 1–aspartate 20 and valine 225–arginine 278. The span at arginine 258–arginine 278 shows a compositional bias: basic residues.

It belongs to the universal ribosomal protein uL2 family. As to quaternary structure, part of the 50S ribosomal subunit. Forms a bridge to the 30S subunit in the 70S ribosome.

Functionally, one of the primary rRNA binding proteins. Required for association of the 30S and 50S subunits to form the 70S ribosome, for tRNA binding and peptide bond formation. It has been suggested to have peptidyltransferase activity; this is somewhat controversial. Makes several contacts with the 16S rRNA in the 70S ribosome. The chain is Large ribosomal subunit protein uL2 from Cutibacterium acnes (strain DSM 16379 / KPA171202) (Propionibacterium acnes).